The sequence spans 129 residues: Glycine cleavage system H protein (129 aa).

The Lipoyl-binding domain maps to 24–106; sequence TYTVGITEHA…YTDGWIFKIR (83 aa). Lysine 65 is modified (N6-lipoyllysine).

This sequence belongs to the GcvH family. The glycine cleavage system is composed of four proteins: P, T, L and H. (R)-lipoate is required as a cofactor.

In terms of biological role, the glycine cleavage system catalyzes the degradation of glycine. The H protein shuttles the methylamine group of glycine from the P protein to the T protein. The chain is Glycine cleavage system H protein from Enterobacter sp. (strain 638).